A 408-amino-acid polypeptide reads, in one-letter code: MSNNTNKQYTTQELNSMSNDDLARLGTELDDVTIAYRKERFPVANDPAEKRAARSVGIWAALGILGGIGFLITYIFWPWEYQGHGDDGLMWYTLYTPMLGITSGLCIISLGIAGVLYVKKFIPEEIAVQRRHDGPSEEVDRRTLVALLNDSWQTSTLGRRKVLQGLLAGGAVMAGLTIVAPLGGMIKNPWRPQDGPMDVMGDGTLWTSGWTLQEQGVKLYLGRDTGAIAESHTGESGQHWITTGVSRLVRMRPEDLAAASMETVFPLPAEDVNDGDLYDPQRDVYTNHMHSIHGPRNAVMLIRLRTADAERVIEREGQESFHYGDYYAYSKICTHIGCPTSLYEAQTNRILCPCHQSQFDALHYGKPVFGPAARALPQLPITVDEEGYLIADGNFIEPLGPAFWERKS.

3 helical membrane-spanning segments follow: residues 56–76 (VGIW…TYIF), 98–118 (MLGI…VLYV), and 166–186 (LLAG…GGMI). One can recognise a Rieske domain in the interval 293–390 (HGPRNAVMLI…ITVDEEGYLI (98 aa)). Residues Cys333, His335, Cys352, and His355 each coordinate [2Fe-2S] cluster. A disulfide bridge connects residues Cys338 and Cys354.

This sequence belongs to the Rieske iron-sulfur protein family. In terms of assembly, the cytochrome bc1 complex is composed of a cytochrome b (QcrB), the Rieske iron-sulfur protein (QcrA) and a diheme cytochrome c (QcrC) subunit. The bc1 complex forms a supercomplex with cytochrome c oxidase (cytochrome aa3). Requires [2Fe-2S] cluster as cofactor.

It localises to the cell membrane. Its function is as follows. Iron-sulfur subunit of the cytochrome bc1 complex, an essential component of the respiratory electron transport chain required for ATP synthesis. The bc1 complex catalyzes the oxidation of menaquinol and the reduction of cytochrome c in the respiratory chain. The bc1 complex operates through a Q-cycle mechanism that couples electron transfer to generation of the proton gradient that drives ATP synthesis. In Corynebacterium efficiens (strain DSM 44549 / YS-314 / AJ 12310 / JCM 11189 / NBRC 100395), this protein is Cytochrome bc1 complex Rieske iron-sulfur subunit (qcrA).